A 1488-amino-acid polypeptide reads, in one-letter code: Chromosome partition protein MukB (1488 aa).

34–41 (GGNGAGKS) is an ATP binding site. Coiled coils occupy residues 326–418 (LEAD…QYNQ), 444–472 (LDTFQAKEQEATEKLLSLEQKMSVAQTAH), and 509–602 (RHLA…QRAP). Residues 666 to 783 (PGGAEDQRLN…SLPIFGRAAR (118 aa)) form a flexible hinge region. Coiled-coil stretches lie at residues 835 to 923 (EAEI…AKLE), 977 to 1116 (EMLS…AKAG), and 1209 to 1265 (VEAI…LQSV).

This sequence belongs to the SMC family. MukB subfamily. As to quaternary structure, homodimerization via its hinge domain. Binds to DNA via its C-terminal region. Interacts, and probably forms a ternary complex, with MukE and MukF via its C-terminal region. The complex formation is stimulated by calcium or magnesium. Interacts with tubulin-related protein FtsZ.

It is found in the cytoplasm. It localises to the nucleoid. Plays a central role in chromosome condensation, segregation and cell cycle progression. Functions as a homodimer, which is essential for chromosome partition. Involved in negative DNA supercoiling in vivo, and by this means organize and compact chromosomes. May achieve or facilitate chromosome segregation by condensation DNA from both sides of a centrally located replisome during cell division. The chain is Chromosome partition protein MukB from Salmonella paratyphi B (strain ATCC BAA-1250 / SPB7).